Consider the following 1819-residue polypeptide: Gamma-tubulin complex component 6 (1819 aa).

Disordered stretches follow at residues 810-889 (SEAH…GARP), 929-951 (LPPS…PQEY), and 1000-1023 (RETL…QPTE). Tandem repeats lie at residues 1027–1053 (GQVS…WNTH), 1054–1080 (GHVS…WNTH), 1081–1107 (GHVS…WNIH), 1108–1134 (GHVS…WNTH), 1135–1161 (GHVS…WNTH), 1162–1188 (GHVS…WNTH), 1189–1215 (GHVS…WNTH), 1216–1242 (GHVS…CNTH), and 1243–1269 (GHVS…WNTH). The interval 1027–1269 (GQVSGGGLPT…VSTRPRWNTH (243 aa)) is 9 X 27 AA tandem repeats. The segment at 1271 to 1412 (PIPPPHMVLG…EAEASAAEAQ (142 aa)) is disordered. The segment covering 1297–1314 (PPGHTSQSALSLGAQSTV) has biased composition (polar residues). Positions 1321–1335 (LPVEVGPSLSSPSSG) are enriched in low complexity. The segment covering 1384-1398 (WPLNSQEDTAAQSSP) has biased composition (polar residues).

Belongs to the TUBGCP family. As to quaternary structure, component of the gamma-tubulin ring complex (gTuRC) consisting of TUBGCP2, TUBGCP3, TUBGCP4, TUBGCP5 and TUBGCP6 and gamma-tubulin TUBG1 or TUBG2. TUBGCP2, TUBGCP3, TUBGCP4, TUBGCP5 and TUBGCP6 assemble in a 5:5:2:1:1 stoichiometry; each is associated with a gamma-tubulin, thereby arranging 14 gamma-tubulins in a helical manner. Gamma-tubulin at the first position is blocked by TUBGCP3 at the last position, allowing 13 protafilaments to grow into a microtubule. The gTuRC (via TUBGCP3 and TUBGCP6) interacts with ACTB and MZT1; the interactions form a luminal bridge that stabilizes the initial structure during complex assembly. The gTuRC (via TUBGCP2) interacts with MZT2A/MZT2B and CDK5RAP2 (via CM1 motif); the interactions play a role in gTuRC activation.

Its subcellular location is the cytoplasm. The protein resides in the cytoskeleton. The protein localises to the microtubule organizing center. It is found in the centrosome. Functionally, component of the gamma-tubulin ring complex (gTuRC) which mediates microtubule nucleation. The gTuRC regulates the minus-end nucleation of alpha-beta tubulin heterodimers that grow into microtubule protafilaments, a critical step in centrosome duplication and spindle formation. This is Gamma-tubulin complex component 6 (TUBGCP6) from Homo sapiens (Human).